Reading from the N-terminus, the 357-residue chain is Probable dual-specificity RNA methyltransferase RlmN (357 aa).

Glutamate 95 (proton acceptor) is an active-site residue. Residues 105 to 343 enclose the Radical SAM core domain; it reads KKSSYTLCLS…VSIREERGSD (239 aa). A disulfide bridge links cysteine 112 with cysteine 348. Residues cysteine 119, cysteine 123, and cysteine 126 each contribute to the [4Fe-4S] cluster site. Residues 174–175, serine 206, 229–231, and asparagine 305 each bind S-adenosyl-L-methionine; these read GE and SLH. The active-site S-methylcysteine intermediate is cysteine 348.

The protein belongs to the radical SAM superfamily. RlmN family. Requires [4Fe-4S] cluster as cofactor.

The protein localises to the cytoplasm. The enzyme catalyses adenosine(2503) in 23S rRNA + 2 reduced [2Fe-2S]-[ferredoxin] + 2 S-adenosyl-L-methionine = 2-methyladenosine(2503) in 23S rRNA + 5'-deoxyadenosine + L-methionine + 2 oxidized [2Fe-2S]-[ferredoxin] + S-adenosyl-L-homocysteine. The catalysed reaction is adenosine(37) in tRNA + 2 reduced [2Fe-2S]-[ferredoxin] + 2 S-adenosyl-L-methionine = 2-methyladenosine(37) in tRNA + 5'-deoxyadenosine + L-methionine + 2 oxidized [2Fe-2S]-[ferredoxin] + S-adenosyl-L-homocysteine. Functionally, specifically methylates position 2 of adenine 2503 in 23S rRNA and position 2 of adenine 37 in tRNAs. This is Probable dual-specificity RNA methyltransferase RlmN from Syntrophomonas wolfei subsp. wolfei (strain DSM 2245B / Goettingen).